Here is a 236-residue protein sequence, read N- to C-terminus: Peroxisomal membrane protein 11D (236 aa).

Glycine 2 bears the N-acetylglycine mark. Residues 2 to 92 are Cytoplasmic-facing; it reads GTTLDVSRAE…LPLVLLGKSK (91 aa). A helical transmembrane segment spans residues 93–109; it reads NALLSTFLFLDQIVWLG. Residues 110-207 lie on the Lumenal side of the membrane; it reads RSGIYKNKER…LLQLAPTKIT (98 aa). Residues 208–227 traverse the membrane as a helical segment; the sequence is PRVTGAFGFITSIISCYQLL. Residues 228–236 are Cytoplasmic-facing; it reads PTRPKIKTP.

Belongs to the peroxin-11 family. In terms of assembly, homooligomer. Interacts with ARC5 and FIS1B on peroxisomes. Expressed in developing siliques.

Its subcellular location is the peroxisome membrane. Involved in peroxisomal proliferation. Promotes peroxisomal duplication, aggregation or elongation without fission. The polypeptide is Peroxisomal membrane protein 11D (PEX11D) (Arabidopsis thaliana (Mouse-ear cress)).